A 537-amino-acid polypeptide reads, in one-letter code: Eukaryotic translation initiation factor 3 subunit L (537 aa).

Basic and acidic residues predominate over residues 1–19 (MSRRVEFDMSHEDHTDRRR). Residues 1–28 (MSRRVEFDMSHEDHTDRRRTNTFSSEED) form a disordered region. The 189-residue stretch at 297 to 485 (EATKMFVNCL…GPSTVDDDEP (189 aa)) folds into the PCI domain.

The protein belongs to the eIF-3 subunit L family. In terms of assembly, component of the eukaryotic translation initiation factor 3 (eIF-3) complex.

The protein localises to the cytoplasm. Component of the eukaryotic translation initiation factor 3 (eIF-3) complex, which is involved in protein synthesis of a specialized repertoire of mRNAs and, together with other initiation factors, stimulates binding of mRNA and methionyl-tRNAi to the 40S ribosome. The eIF-3 complex specifically targets and initiates translation of a subset of mRNAs involved in cell proliferation. The chain is Eukaryotic translation initiation factor 3 subunit L from Caenorhabditis briggsae.